We begin with the raw amino-acid sequence, 91 residues long: Small ribosomal subunit protein uS19 (91 aa).

It belongs to the universal ribosomal protein uS19 family.

Functionally, protein S19 forms a complex with S13 that binds strongly to the 16S ribosomal RNA. The sequence is that of Small ribosomal subunit protein uS19 from Delftia acidovorans (strain DSM 14801 / SPH-1).